A 105-amino-acid polypeptide reads, in one-letter code: Iron-sulfur cluster assembly protein CyaY (105 aa).

The protein belongs to the frataxin family.

Functionally, involved in iron-sulfur (Fe-S) cluster assembly. May act as a regulator of Fe-S biogenesis. The protein is Iron-sulfur cluster assembly protein CyaY of Paraburkholderia phymatum (strain DSM 17167 / CIP 108236 / LMG 21445 / STM815) (Burkholderia phymatum).